The sequence spans 174 residues: RNA pyrophosphohydrolase (174 aa).

Positions Gly6–Lys149 constitute a Nudix hydrolase domain. A Nudix box motif is present at residues Gly38–Gly59.

Belongs to the Nudix hydrolase family. RppH subfamily. The cofactor is a divalent metal cation.

Functionally, accelerates the degradation of transcripts by removing pyrophosphate from the 5'-end of triphosphorylated RNA, leading to a more labile monophosphorylated state that can stimulate subsequent ribonuclease cleavage. In Neisseria meningitidis serogroup A / serotype 4A (strain DSM 15465 / Z2491), this protein is RNA pyrophosphohydrolase.